Here is a 126-residue protein sequence, read N- to C-terminus: Large ribosomal subunit protein uL24 (126 aa).

The segment at 1-23 (MKFSRDVTSSRRKQRKAHFGAPS) is disordered.

Belongs to the universal ribosomal protein uL24 family. In terms of assembly, component of the large ribosomal subunit (LSU). Mature yeast ribosomes consist of a small (40S) and a large (60S) subunit. The 40S small subunit contains 1 molecule of ribosomal RNA (18S rRNA) and at least 33 different proteins. The large 60S subunit contains 3 rRNA molecules (25S, 5.8S and 5S rRNA) and at least 46 different proteins.

It is found in the cytoplasm. Its subcellular location is the nucleus. The protein resides in the nucleolus. Its function is as follows. Component of the ribosome, a large ribonucleoprotein complex responsible for the synthesis of proteins in the cell. The small ribosomal subunit (SSU) binds messenger RNAs (mRNAs) and translates the encoded message by selecting cognate aminoacyl-transfer RNA (tRNA) molecules. The large subunit (LSU) contains the ribosomal catalytic site termed the peptidyl transferase center (PTC), which catalyzes the formation of peptide bonds, thereby polymerizing the amino acids delivered by tRNAs into a polypeptide chain. The nascent polypeptides leave the ribosome through a tunnel in the LSU and interact with protein factors that function in enzymatic processing, targeting, and the membrane insertion of nascent chains at the exit of the ribosomal tunnel. This Schizosaccharomyces pombe (strain 972 / ATCC 24843) (Fission yeast) protein is Large ribosomal subunit protein uL24 (rpl26).